The chain runs to 521 residues: Fucosyltransferase 3 (521 aa).

A compositionally biased stretch (basic and acidic residues) spans 1-12; it reads MKRGKKNSDAGD. The segment at 1-29 is disordered; it reads MKRGKKNSDAGDRLTNSDTRTGSSELNAM. At 1 to 39 the chain is on the cytoplasmic side; sequence MKRGKKNSDAGDRLTNSDTRTGSSELNAMMKPSLSSMKT. Polar residues predominate over residues 14 to 26; that stretch reads LTNSDTRTGSSEL. The helical; Signal-anchor for type II membrane protein transmembrane segment at 40 to 60 threads the bilayer; it reads MGLLLAVLMVASVMFSLSVVL. Residues 61-521 lie on the Lumenal side of the membrane; that stretch reads RDPPSDDVIE…QATLFHGCKD (461 aa). Asn-152, Asn-222, and Asn-493 each carry an N-linked (GlcNAc...) asparagine glycan.

It belongs to the glycosyltransferase 37 family. Expressed in roots, stems, leaves, flowers, siliques and seedlings.

Its subcellular location is the golgi apparatus. The protein localises to the golgi stack membrane. It functions in the pathway protein modification; protein glycosylation. Functionally, may be involved in cell wall biosynthesis. May act as a fucosyltransferase. In Arabidopsis thaliana (Mouse-ear cress), this protein is Fucosyltransferase 3 (FUT3).